Consider the following 285-residue polypeptide: E2F-associated phosphoprotein (285 aa).

Residue M1 is modified to N-acetylmethionine. Residues 1–30 (MNRLPDDYDPYAVEEPSDEEPALSSSEDEV) are disordered. Residues 15 to 30 (EPSDEEPALSSSEDEV) are compositionally biased toward acidic residues. Phosphoserine is present on S17. T37 carries the phosphothreonine modification. Residues 48 to 96 (CLTGESESSSEDEFEKEMEAELNSTMKTMEDKLSSLGTGSSSGNGKVAT) are disordered. The span at 55–67 (SSSEDEFEKEMEA) shows a compositional bias: acidic residues. Low complexity predominate over residues 81–92 (SSLGTGSSSGNG). Phosphoserine occurs at positions 109 and 111. The tract at residues 118–144 (VQVTKKKKKKQHKIPTNDELLYDPEKD) is disordered. Residues 121-130 (TKKKKKKQHK) show a composition bias toward basic residues.

In terms of assembly, interacts with E2F1. The C-terminal half binds the N-terminal of E2F1. Also interacts with E2F2 and E2F3, but not E2F4. In terms of tissue distribution, ubiquitously expressed. Highest levels in heart, placenta, skeletal muscle and pancreas. Lower levels in brain, lung and kidney. In the brain, expressed in all regions with high levels in the cerebellum and cerebral cortex. Expressed in COS1 and transformed skin fibroblasts.

It localises to the cytoplasm. The protein localises to the nucleus. Functionally, may play an important role in the fine-tuning of both major E2F1 activities, the regulation of the cell-cycle and the induction of apoptosis. Promotes S-phase entry, and inhibits p14(ARP) expression. The sequence is that of E2F-associated phosphoprotein (EAPP) from Homo sapiens (Human).